A 290-amino-acid polypeptide reads, in one-letter code: Elongation factor Ts (290 aa).

The interval Thr79–Val82 is involved in Mg(2+) ion dislocation from EF-Tu.

This sequence belongs to the EF-Ts family.

The protein localises to the cytoplasm. Functionally, associates with the EF-Tu.GDP complex and induces the exchange of GDP to GTP. It remains bound to the aminoacyl-tRNA.EF-Tu.GTP complex up to the GTP hydrolysis stage on the ribosome. The chain is Elongation factor Ts from Pseudoalteromonas atlantica (strain T6c / ATCC BAA-1087).